Here is a 757-residue protein sequence, read N- to C-terminus: RNA-directed RNA polymerase catalytic subunit (757 aa).

Positions 53–82 (GRWTKNTETGAPQLNPIDGPLPKDNEPSGY) are disordered. Short sequence motifs (nuclear localization signal) lie at residues 187–195 (RKRRVRDNV) and 203–216 (RTIG…NKRS). The segment at 249 to 256 (RGFVYFVE) is promoter-binding site. The region spanning 286-483 (VRKMMTNSQD…GINMSKKKSY (198 aa)) is the RdRp catalytic domain.

This sequence belongs to the influenza viruses polymerase PB1 family. In terms of assembly, influenza RNA polymerase is composed of three subunits: PB1, PB2 and PA. Interacts (via N-terminus) with PA (via C-terminus). Interacts (via C-terminus) with PB2 (via N-terminus); this interaction is essential for transcription initiation. Interacts (via C-terminus) with human PKP2 (via N-terminus); the interaction competitively inhibits the interaction between the RNA polymerase subunits PB1 and PB2. In terms of processing, phosphorylated by host PRKCA.

It is found in the host nucleus. It localises to the host cytoplasm. The catalysed reaction is RNA(n) + a ribonucleoside 5'-triphosphate = RNA(n+1) + diphosphate. Functionally, RNA-dependent RNA polymerase which is responsible for replication and transcription of virus RNA segments. The transcription of viral mRNAs occurs by a unique mechanism called cap-snatching. 5' methylated caps of cellular mRNAs are cleaved after 10-13 nucleotides by PA. In turn, these short capped RNAs are used as primers by PB1 for transcription of viral mRNAs. During virus replication, PB1 initiates RNA synthesis and copy vRNA into complementary RNA (cRNA) which in turn serves as a template for the production of more vRNAs. This chain is RNA-directed RNA polymerase catalytic subunit, found in Influenza A virus (strain A/India/6263/1980 H1N1).